A 157-amino-acid chain; its full sequence is Baculoviral IAP repeat-containing protein 5.2-A (157 aa).

A BIR repeat occupies 31–101 (RLRTFSNWPF…KHSPSCLFIA (71 aa)). Thr47 bears the Phosphothreonine; by CDK1 mark. The Zn(2+) site is built by Cys70, Cys73, His90, and Cys97.

It belongs to the IAP family. As to quaternary structure, component of the CPC at least composed of survivin/birc5, incenp, cdca8/borealin and/or cdca9/dasra-A, and aurkb/aurora-B. Interacts directly with incenp (via N-terminus). Interacts with rxra; the interaction is stronger in the absence of 9-cis retinoic acids. In terms of processing, ubiquitination is required for centrosome-targeting. In terms of tissue distribution, highly expressed in vascular endothelial cells of tadpoles.

It is found in the cytoplasm. The protein resides in the nucleus. Its subcellular location is the chromosome. The protein localises to the centromere. It localises to the cytoskeleton. It is found in the spindle. In terms of biological role, component of the chromosomal passenger complex (CPC), a complex that acts as a key regulator of mitosis. The CPC complex has essential functions at the centromere in ensuring correct chromosome alignment and segregation and is required for chromatin-induced microtubule stabilization and spindle assembly. Does not appear to exhibit anti-apoptotic activity. Plays a role in increasing blood vessel size during development. The sequence is that of Baculoviral IAP repeat-containing protein 5.2-A (birc5.2-a) from Xenopus laevis (African clawed frog).